The following is a 248-amino-acid chain: Isoamyl acetate-hydrolyzing esterase 1 homolog (248 aa).

Ser-24 functions as the Nucleophile in the catalytic mechanism. Lys-63 carries the post-translational modification N6-succinyllysine. Asp-196 (proton donor) is an active-site residue. His-199 acts as the Proton acceptor in catalysis.

It belongs to the 'GDSL' lipolytic enzyme family. IAH1 subfamily.

Its function is as follows. Probable lipase. This is Isoamyl acetate-hydrolyzing esterase 1 homolog (IAH1) from Homo sapiens (Human).